Consider the following 165-residue polypeptide: UPF0178 protein Bphyt_5655 (165 aa).

Disordered regions lie at residues 115–134 (LRGS…RDSK) and 139–165 (ELDR…PPTE).

Belongs to the UPF0178 family.

This Paraburkholderia phytofirmans (strain DSM 17436 / LMG 22146 / PsJN) (Burkholderia phytofirmans) protein is UPF0178 protein Bphyt_5655.